The sequence spans 45 residues: MNGETPAQKAARLAAAAALAAKTAADAAAKAAAKAAAIAAAAASA.

At Met-1 the chain carries Blocked amino end (Met). 3 consecutive repeats follow at residues 9 to 21 (KAAR…ALAA), 22 to 33 (KTAADAAAKAAA), and 34 to 45 (KAAAIAAAAASA).

It belongs to the type-I AFP family.

In terms of biological role, antifreeze proteins lower the blood freezing point. In Myoxocephalus scorpius (Shorthorn sculpin), this protein is Ice-structuring protein SS-8.